A 493-amino-acid polypeptide reads, in one-letter code: Desmethylyatein synthase (493 aa).

A helical membrane pass occupies residues 1–21 (METFQCLTLFLLFISTVFILK). Cys-434 provides a ligand contact to heme.

Belongs to the cytochrome P450 family. The cofactor is heme.

The protein resides in the membrane. The enzyme catalyses (-)-bursehernin + reduced [NADPH--hemoprotein reductase] + O2 = (-)-5'-demethylyatein + oxidized [NADPH--hemoprotein reductase] + H2O + H(+). The protein operates within aromatic compound metabolism; phenylpropanoid biosynthesis. Functionally, cytochrome P450 involved in the biosynthesis of etoposide, a chemotherapeutic compound of the topoisomerase inhibitor family. Catalyzes the conversion of bursehernin to demethylyatein. This chain is Desmethylyatein synthase, found in Sinopodophyllum hexandrum (Himalayan may apple).